The sequence spans 474 residues: Hepatocyte nuclear factor 4-alpha (474 aa).

Residues 57–132 (SALCAICGDR…AGMKKEAVQN (76 aa)) constitute a DNA-binding region (nuclear receptor). 2 consecutive NR C4-type zinc fingers follow at residues 60-80 (CAIC…CDGC) and 96-120 (CRFS…LKKC). A phosphoserine mark is found at S142 and S143. Y144 is modified (phosphotyrosine). The NR LBD domain occupies 147–377 (SSLPSINALL…NLLQEMLLGG (231 aa)). Phosphothreonine is present on T166. S167 carries the post-translational modification Phosphoserine. Residues K234 and K307 each participate in a glycyl lysine isopeptide (Lys-Gly) (interchain with G-Cter in ubiquitin) cross-link. The residue at position 313 (S313) is a Phosphoserine; by AMPK. A 9aaTAD motif is present at residues 368-376 (NLLQEMLLG). Positions 419–447 (EWPRPRGQAATPETPQPSPPGGSGSEPYK) are disordered. 2 positions are modified to phosphothreonine: T429 and T432. At S436 the chain carries Phosphoserine. N6-acetyllysine is present on K458.

The protein belongs to the nuclear hormone receptor family. NR2 subfamily. In terms of assembly, homodimerization is required for HNF4-alpha to bind to its recognition site. Interacts with CLOCK, BMAL1, CRY1, CRY2, PER1 and PER2. Interacts with NR0B2/SHP; the resulting heterodimer is transcriptionally inactive. Interacts with DDX3X; this interaction disrupts the interaction between HNF4 and NR0B2 that forms inactive heterodimers and enhances the formation of active HNF4 homodimers. Phosphorylated on tyrosine residue(s); phosphorylation is important for its DNA-binding activity. Phosphorylation may directly or indirectly play a regulatory role in the subnuclear distribution. Phosphorylation at Ser-313 by AMPK reduces the ability to form homodimers and bind DNA. Post-translationally, acetylation at Lys-458 lowers transcriptional activation by about two-fold.

The protein resides in the nucleus. Its function is as follows. Transcriptional regulator which controls the expression of hepatic genes during the transition of endodermal cells to hepatic progenitor cells, facilitating the recruitment of RNA pol II to the promoters of target genes. Activates the transcription of CYP2C38. Represses the CLOCK-BMAL1 transcriptional activity and is essential for circadian rhythm maintenance and period regulation in the liver and colon cells. The polypeptide is Hepatocyte nuclear factor 4-alpha (HNF4A) (Homo sapiens (Human)).